The following is a 300-amino-acid chain: Protease HtpX homolog (300 aa).

2 helical membrane passes run 7-24 (GILMAVMTALFLGVGALI) and 29-46 (GAIIALVIAAGMNLFTFW). Zn(2+) is bound at residue His130. Glu131 is a catalytic residue. His134 lines the Zn(2+) pocket. The next 2 helical transmembrane spans lie at 145–165 (VTATFAGAISMLANFAFFFGG) and 174–194 (PMGLVGTLALMFLAPLAAGLV). A Zn(2+)-binding site is contributed by Glu203.

It belongs to the peptidase M48B family. Requires Zn(2+) as cofactor.

It is found in the cell inner membrane. In Cereibacter sphaeroides (strain ATCC 17029 / ATH 2.4.9) (Rhodobacter sphaeroides), this protein is Protease HtpX homolog.